The chain runs to 86 residues: Large ribosomal subunit protein bL31B (86 aa).

This sequence belongs to the bacterial ribosomal protein bL31 family. Type B subfamily. As to quaternary structure, part of the 50S ribosomal subunit.

The polypeptide is Large ribosomal subunit protein bL31B (Streptococcus uberis (strain ATCC BAA-854 / 0140J)).